Reading from the N-terminus, the 252-residue chain is Small ribosomal subunit protein eS4 (252 aa).

Positions 43–105 (FPLLIIVRDI…TGETYRVIPV (63 aa)) constitute an S4 RNA-binding domain.

This sequence belongs to the eukaryotic ribosomal protein eS4 family.

The sequence is that of Small ribosomal subunit protein eS4 from Staphylothermus marinus (strain ATCC 43588 / DSM 3639 / JCM 9404 / F1).